The following is a 150-amino-acid chain: Cytochrome c oxidase subunit 5A, mitochondrial (150 aa).

A mitochondrion-targeting transit peptide spans 1–41; the sequence is MLGAALRRCAVAATTRAGPRGLLHSARTPGPAAAIQSVRCY. The short motif at 2-17 is the SIFI-degron element; it reads LGAALRRCAVAATTRA. N6-acetyllysine is present on residues lysine 87 and lysine 113. Threonine 141 carries the phosphothreonine modification.

Belongs to the cytochrome c oxidase subunit 5A family. Component of the cytochrome c oxidase (complex IV, CIV), a multisubunit enzyme composed of 14 subunits. The complex is composed of a catalytic core of 3 subunits MT-CO1, MT-CO2 and MT-CO3, encoded in the mitochondrial DNA, and 11 supernumerary subunits COX4I, COX5A, COX5B, COX6A, COX6B, COX6C, COX7A, COX7B, COX7C, COX8 and NDUFA4, which are encoded in the nuclear genome. The complex exists as a monomer or a dimer and forms supercomplexes (SCs) in the inner mitochondrial membrane with NADH-ubiquinone oxidoreductase (complex I, CI) and ubiquinol-cytochrome c oxidoreductase (cytochrome b-c1 complex, complex III, CIII), resulting in different assemblies (supercomplex SCI(1)III(2)IV(1) and megacomplex MCI(2)III(2)IV(2)). Interacts with AFG1L. Interacts with RAB5IF. Post-translationally, in response to mitochondrial stress, the precursor protein is ubiquitinated by the SIFI complex in the cytoplasm before mitochondrial import, leading to its degradation. Within the SIFI complex, UBR4 initiates ubiquitin chain that are further elongated or branched by KCMF1.

It localises to the mitochondrion inner membrane. Its pathway is energy metabolism; oxidative phosphorylation. Component of the cytochrome c oxidase, the last enzyme in the mitochondrial electron transport chain which drives oxidative phosphorylation. The respiratory chain contains 3 multisubunit complexes succinate dehydrogenase (complex II, CII), ubiquinol-cytochrome c oxidoreductase (cytochrome b-c1 complex, complex III, CIII) and cytochrome c oxidase (complex IV, CIV), that cooperate to transfer electrons derived from NADH and succinate to molecular oxygen, creating an electrochemical gradient over the inner membrane that drives transmembrane transport and the ATP synthase. Cytochrome c oxidase is the component of the respiratory chain that catalyzes the reduction of oxygen to water. Electrons originating from reduced cytochrome c in the intermembrane space (IMS) are transferred via the dinuclear copper A center (CU(A)) of subunit 2 and heme A of subunit 1 to the active site in subunit 1, a binuclear center (BNC) formed by heme A3 and copper B (CU(B)). The BNC reduces molecular oxygen to 2 water molecules using 4 electrons from cytochrome c in the IMS and 4 protons from the mitochondrial matrix. This is Cytochrome c oxidase subunit 5A, mitochondrial (COX5A) from Pan troglodytes (Chimpanzee).